An 816-amino-acid polypeptide reads, in one-letter code: Stemod-13(17)-ene synthase (816 aa).

Over residues 1–10 the composition is skewed to polar residues; sequence MMLLSSSYSG. The interval 1–24 is disordered; it reads MMLLSSSYSGGQFPGVSPLGTRPK. Mg(2+)-binding residues include Asp553, Asp557, Asn698, Thr702, and Glu706. The DDXXD motif motif lies at 553–557; it reads DDFFD.

It belongs to the terpene synthase family. Requires Mg(2+) as cofactor.

It catalyses the reaction 9alpha-copalyl diphosphate = stemod-13(17)-ene + diphosphate. Its function is as follows. Catalyzes the conversion of syn-copalyl diphosphate to stemodene. The chain is Stemod-13(17)-ene synthase (KSL11) from Oryza sativa subsp. indica (Rice).